The chain runs to 378 residues: Alcohol dehydrogenase 1 (378 aa).

Residue C48 participates in Zn(2+) binding. 49–53 serves as a coordination point for NAD(+); it reads HTDVL. Positions 69, 99, 102, 105, 113, and 177 each coordinate Zn(2+). Residues 202-207, D226, K231, 274-276, 297-299, and 321-323 each bind NAD(+); these read GIGTVG, TGV, IGA, and TTF.

Belongs to the zinc-containing alcohol dehydrogenase family. Class-IV subfamily. Homodimer. It depends on Zn(2+) as a cofactor. In terms of tissue distribution, expressed in flowers and disk florets.

The protein operates within isoprenoid biosynthesis. The protein is Alcohol dehydrogenase 1 of Tanacetum cinerariifolium (Dalmatian daisy).